A 692-amino-acid polypeptide reads, in one-letter code: Elongation factor G (692 aa).

The tr-type G domain occupies 9-284 (HKVRNIGIAA…AVVDYLPAPD (276 aa)). GTP contacts are provided by residues 18–25 (AHIDAGKT), 82–86 (DTPGH), and 136–139 (NKMD).

Belongs to the TRAFAC class translation factor GTPase superfamily. Classic translation factor GTPase family. EF-G/EF-2 subfamily.

The protein resides in the cytoplasm. Its function is as follows. Catalyzes the GTP-dependent ribosomal translocation step during translation elongation. During this step, the ribosome changes from the pre-translocational (PRE) to the post-translocational (POST) state as the newly formed A-site-bound peptidyl-tRNA and P-site-bound deacylated tRNA move to the P and E sites, respectively. Catalyzes the coordinated movement of the two tRNA molecules, the mRNA and conformational changes in the ribosome. The chain is Elongation factor G from Campylobacter concisus (strain 13826).